A 311-amino-acid chain; its full sequence is Methionyl-tRNA formyltransferase (311 aa).

A (6S)-5,6,7,8-tetrahydrofolate-binding site is contributed by serine 110–proline 113.

This sequence belongs to the Fmt family.

The enzyme catalyses L-methionyl-tRNA(fMet) + (6R)-10-formyltetrahydrofolate = N-formyl-L-methionyl-tRNA(fMet) + (6S)-5,6,7,8-tetrahydrofolate + H(+). Its function is as follows. Attaches a formyl group to the free amino group of methionyl-tRNA(fMet). The formyl group appears to play a dual role in the initiator identity of N-formylmethionyl-tRNA by promoting its recognition by IF2 and preventing the misappropriation of this tRNA by the elongation apparatus. The protein is Methionyl-tRNA formyltransferase of Streptococcus sanguinis (strain SK36).